The following is a 38-amino-acid chain: Cytochrome b6-f complex subunit 5 (38 aa).

A helical transmembrane segment spans residues 5–25; that stretch reads LVLGLVMGLVPITLAGLFVAA.

It belongs to the PetG family. The 4 large subunits of the cytochrome b6-f complex are cytochrome b6, subunit IV (17 kDa polypeptide, PetD), cytochrome f and the Rieske protein, while the 4 small subunits are PetG, PetL, PetM and PetN. The complex functions as a dimer.

The protein resides in the cellular thylakoid membrane. Component of the cytochrome b6-f complex, which mediates electron transfer between photosystem II (PSII) and photosystem I (PSI), cyclic electron flow around PSI, and state transitions. PetG is required for either the stability or assembly of the cytochrome b6-f complex. The chain is Cytochrome b6-f complex subunit 5 from Gloeothece citriformis (strain PCC 7424) (Cyanothece sp. (strain PCC 7424)).